The chain runs to 172 residues: Sec-independent protein translocase protein TatB (172 aa).

A helical transmembrane segment spans residues 1–21 (MFDIGWSELLVIGVVALIAIG).

The protein belongs to the TatB family. The Tat system comprises two distinct complexes: a TatABC complex, containing multiple copies of TatA, TatB and TatC subunits, and a separate TatA complex, containing only TatA subunits. Substrates initially bind to the TatABC complex, which probably triggers association of the separate TatA complex to form the active translocon.

It localises to the cell inner membrane. Functionally, part of the twin-arginine translocation (Tat) system that transports large folded proteins containing a characteristic twin-arginine motif in their signal peptide across membranes. Together with TatC, TatB is part of a receptor directly interacting with Tat signal peptides. TatB may form an oligomeric binding site that transiently accommodates folded Tat precursor proteins before their translocation. The sequence is that of Sec-independent protein translocase protein TatB from Rhodopseudomonas palustris (strain BisB18).